Here is a 325-residue protein sequence, read N- to C-terminus: Glutarate 2-hydroxylase (325 aa).

Fe cation is bound by residues H160, D162, and H292.

The protein belongs to the glutarate hydroxylase family. In terms of assembly, homotetramer. Fe(2+) serves as cofactor.

It carries out the reaction glutarate + 2-oxoglutarate + O2 = (S)-2-hydroxyglutarate + succinate + CO2. It participates in amino-acid degradation. Its function is as follows. Acts as an alpha-ketoglutarate-dependent dioxygenase catalyzing hydroxylation of glutarate (GA) to L-2-hydroxyglutarate (L2HG). Functions in a L-lysine degradation pathway that proceeds via cadaverine, glutarate and L-2-hydroxyglutarate. The chain is Glutarate 2-hydroxylase from Escherichia coli O6:H1 (strain CFT073 / ATCC 700928 / UPEC).